Here is a 71-residue protein sequence, read N- to C-terminus: MKAGIHPEYVAITAKCSCGNVINTFSTMGKDLNLDVCSACHPFYTGKQKEVSSGGRVDKFNKRFGGLTAKK.

Zn(2+) contacts are provided by Cys16, Cys18, Cys37, and Cys40.

Belongs to the bacterial ribosomal protein bL31 family. Type A subfamily. In terms of assembly, part of the 50S ribosomal subunit. Zn(2+) serves as cofactor.

Binds the 23S rRNA. This is Large ribosomal subunit protein bL31 from Aeromonas salmonicida (strain A449).